The following is a 110-amino-acid chain: uncharacterized protein (110 aa).

Polar residues predominate over residues 1-20 (MNQQNQKISNPQTPVPTTSE). Residues 1 to 24 (MNQQNQKISNPQTPVPTTSEMNDR) are disordered.

This is an uncharacterized protein from Bacillus subtilis (strain 168).